We begin with the raw amino-acid sequence, 180 residues long: ATP-dependent protease subunit HslV (180 aa).

Residue threonine 5 is part of the active site. 3 residues coordinate Na(+): glycine 165, cysteine 168, and threonine 171.

The protein belongs to the peptidase T1B family. HslV subfamily. As to quaternary structure, a double ring-shaped homohexamer of HslV is capped on each side by a ring-shaped HslU homohexamer. The assembly of the HslU/HslV complex is dependent on binding of ATP.

It localises to the cytoplasm. It catalyses the reaction ATP-dependent cleavage of peptide bonds with broad specificity.. With respect to regulation, allosterically activated by HslU binding. Protease subunit of a proteasome-like degradation complex believed to be a general protein degrading machinery. The protein is ATP-dependent protease subunit HslV of Helicobacter pylori (strain J99 / ATCC 700824) (Campylobacter pylori J99).